The primary structure comprises 79 residues: uncharacterized protein (79 aa).

The N-terminal stretch at 1-20 is a signal peptide; it reads MSQLMGIITRLQSLQETAEA.

This is an uncharacterized protein from Bacillus subtilis (strain 168).